We begin with the raw amino-acid sequence, 140 residues long: Nucleoside diphosphate kinase (140 aa).

Residues lysine 11, phenylalanine 59, arginine 87, threonine 93, arginine 104, and asparagine 114 each contribute to the ATP site. Histidine 117 functions as the Pros-phosphohistidine intermediate in the catalytic mechanism.

Belongs to the NDK family. Homotetramer. Requires Mg(2+) as cofactor.

The protein resides in the cytoplasm. The catalysed reaction is a 2'-deoxyribonucleoside 5'-diphosphate + ATP = a 2'-deoxyribonucleoside 5'-triphosphate + ADP. The enzyme catalyses a ribonucleoside 5'-diphosphate + ATP = a ribonucleoside 5'-triphosphate + ADP. In terms of biological role, major role in the synthesis of nucleoside triphosphates other than ATP. The ATP gamma phosphate is transferred to the NDP beta phosphate via a ping-pong mechanism, using a phosphorylated active-site intermediate. This is Nucleoside diphosphate kinase from Bartonella tribocorum (strain CIP 105476 / IBS 506).